Reading from the N-terminus, the 313-residue chain is Pseudouridine kinase (313 aa).

Belongs to the carbohydrate kinase PfkB family.

It carries out the reaction pseudouridine + ATP = psi-UMP + ADP + H(+). Its function is as follows. Catalyzes the phosphorylation of pseudouridine to pseudouridine 5'-phosphate (PsiMP). In Escherichia coli (strain K12), this protein is Pseudouridine kinase (psuK).